Reading from the N-terminus, the 188-residue chain is NEDD8-conjugating enzyme UBC12 (188 aa).

M1 carries the post-translational modification N-acetylmethionine. Residues 1–12 (MLKLRQLQKKKQ) are compositionally biased toward basic residues. Residues 1–23 (MLKLRQLQKKKQKENENSSSIQP) are disordered. A UBC core domain is found at 27–177 (AARIRLKRDL…VRLTMSGGSI (151 aa)). C115 acts as the Glycyl thioester intermediate in catalysis.

It belongs to the ubiquitin-conjugating enzyme family. UBC12 subfamily. As to quaternary structure, interacts with DCN1. The acetylation of Met-1 is cotranslational, and not regulatory. The N-acetylmethionine increases affinity for DCUN1D1 by about 2 orders of magnitude and is crucial for NEDD8 transfer to cullins.

The catalysed reaction is [E1 NEDD8-activating enzyme]-S-[NEDD8 protein]-yl-L-cysteine + [E2 NEDD8-conjugating enzyme]-L-cysteine = [E1 NEDD8-activating enzyme]-L-cysteine + [E2 NEDD8-conjugating enzyme]-S-[NEDD8-protein]-yl-L-cysteine.. It functions in the pathway protein modification; protein neddylation. In terms of biological role, accepts the ubiquitin-like protein NEDD8/RUB1 from the UBA3-ULA1 E1 complex and catalyzes its covalent attachment to other proteins. The major substrate is CDC53/Cullin. This Saccharomyces cerevisiae (strain ATCC 204508 / S288c) (Baker's yeast) protein is NEDD8-conjugating enzyme UBC12 (UBC12).